A 453-amino-acid polypeptide reads, in one-letter code: Citrate (Re)-synthase (453 aa).

The Pyruvate carboxyltransferase domain occupies 46-316 (IYITDTTFRD…TKNMKLHVIT (271 aa)).

This sequence belongs to the alpha-IPM synthase/homocitrate synthase family. The cofactor is Mn(2+). Co(2+) is required as a cofactor. It depends on Mg(2+) as a cofactor.

The catalysed reaction is oxaloacetate + acetyl-CoA + H2O = citrate + CoA + H(+). With respect to regulation, inhibited by p-chloromercuribenzoate (pCMB), EDTA, Zn(2+) ions, and under aerobic conditions. In terms of biological role, catalyzes the condensation of the acetyl group of acetyl-CoA with oxaloacetate to form citrate. This enzyme is highly Re-face stereospecific with respect to the C-2 of oxaloacetate. The chain is Citrate (Re)-synthase from Clostridium kluyveri (strain ATCC 8527 / DSM 555 / NBRC 12016 / NCIMB 10680 / K1).